The following is a 235-amino-acid chain: Large ribosomal subunit protein uL1 (235 aa).

It belongs to the universal ribosomal protein uL1 family. In terms of assembly, part of the 50S ribosomal subunit.

Its function is as follows. Binds directly to 23S rRNA. The L1 stalk is quite mobile in the ribosome, and is involved in E site tRNA release. Functionally, protein L1 is also a translational repressor protein, it controls the translation of the L11 operon by binding to its mRNA. This is Large ribosomal subunit protein uL1 from Micrococcus luteus (strain ATCC 4698 / DSM 20030 / JCM 1464 / CCM 169 / CCUG 5858 / IAM 1056 / NBRC 3333 / NCIMB 9278 / NCTC 2665 / VKM Ac-2230) (Micrococcus lysodeikticus).